Consider the following 258-residue polypeptide: Snake venom serine protease KN12 (258 aa).

The first 18 residues, 1 to 18 (MVLIRVLANLLILQLSYA), serve as a signal peptide directing secretion. Positions 19 to 24 (QRSSEL) are excised as a propeptide. Residues 25-249 (VIGGDECNIN…HLDWIQNIIA (225 aa)) form the Peptidase S1 domain. Cystine bridges form between Cys31–Cys163, Cys50–Cys66, Cys98–Cys256, Cys142–Cys210, Cys174–Cys189, and Cys200–Cys225. His65 acts as the Charge relay system in catalysis. An N-linked (GlcNAc...) asparagine glycan is attached at Asn103. Asp110 functions as the Charge relay system in the catalytic mechanism. Asn121, Asn122, Asn154, and Asn170 each carry an N-linked (GlcNAc...) asparagine glycan. Ser204 (charge relay system) is an active-site residue. Asn251 is a glycosylation site (N-linked (GlcNAc...) asparagine).

Belongs to the peptidase S1 family. Snake venom subfamily. In terms of assembly, monomer. Expressed by the venom gland.

It is found in the secreted. Its function is as follows. Snake venom serine protease that may act in the hemostasis system of the prey. This Trimeresurus stejnegeri (Chinese green tree viper) protein is Snake venom serine protease KN12.